Here is a 193-residue protein sequence, read N- to C-terminus: Potassium-transporting ATPase KdpC subunit (193 aa).

A helical transmembrane segment spans residues 14–34 (ITFTFLVLCGLVYPLIVTGIA).

Belongs to the KdpC family. The system is composed of three essential subunits: KdpA, KdpB and KdpC.

The protein resides in the cell membrane. Functionally, part of the high-affinity ATP-driven potassium transport (or Kdp) system, which catalyzes the hydrolysis of ATP coupled with the electrogenic transport of potassium into the cytoplasm. This subunit acts as a catalytic chaperone that increases the ATP-binding affinity of the ATP-hydrolyzing subunit KdpB by the formation of a transient KdpB/KdpC/ATP ternary complex. This Bacillus cereus (strain AH820) protein is Potassium-transporting ATPase KdpC subunit.